The sequence spans 245 residues: ATP synthase subunit b (245 aa).

The helical transmembrane segment at 3–23 threads the bilayer; the sequence is SFNLLTIVSSIVNLLALAWII.

This sequence belongs to the ATPase B chain family. F-type ATPases have 2 components, F(1) - the catalytic core - and F(0) - the membrane proton channel. F(1) has five subunits: alpha(3), beta(3), gamma(1), delta(1), epsilon(1). F(0) has three main subunits: a(1), b(2) and c(10-14). The alpha and beta chains form an alternating ring which encloses part of the gamma chain. F(1) is attached to F(0) by a central stalk formed by the gamma and epsilon chains, while a peripheral stalk is formed by the delta and b chains.

It localises to the cell inner membrane. In terms of biological role, f(1)F(0) ATP synthase produces ATP from ADP in the presence of a proton or sodium gradient. F-type ATPases consist of two structural domains, F(1) containing the extramembraneous catalytic core and F(0) containing the membrane proton channel, linked together by a central stalk and a peripheral stalk. During catalysis, ATP synthesis in the catalytic domain of F(1) is coupled via a rotary mechanism of the central stalk subunits to proton translocation. Functionally, component of the F(0) channel, it forms part of the peripheral stalk, linking F(1) to F(0). The protein is ATP synthase subunit b of Dictyoglomus thermophilum (strain ATCC 35947 / DSM 3960 / H-6-12).